The primary structure comprises 269 residues: RBPJ-interacting and tubulin-associated protein 1 (269 aa).

The Nuclear export signal signature appears at 5 to 17; the sequence is VELAVSGIQTLPL. 2 disordered regions span residues 37–101 and 141–269; these read SLFG…NKYR and FWTP…PPWK. Over residues 62–77 the composition is skewed to polar residues; the sequence is RTSGVGTGTSRASGAN. Over residues 79–93 the composition is skewed to low complexity; the sequence is SCETTSSSGSTPTLT. The short motif at 92 to 108 is the Nuclear localization signal element; sequence LTPRKKNKYRLISHTPS. The segment at 128 to 156 is interaction with RBPJ/RBPSUH; the sequence is WMAKGDAAKLHSLFWTPPATPRGSHSPRP. Positions 156–269 are interaction with tubulin; that stretch reads PRETPLRAIH…ATQKPKPPWK (114 aa).

This sequence belongs to the RITA family. In terms of assembly, interacts with RBPJ/RBPSUH.

It is found in the cytoplasm. Its subcellular location is the nucleus. It localises to the cytoskeleton. The protein resides in the microtubule organizing center. The protein localises to the centrosome. Functionally, tubulin-binding protein that acts as a negative regulator of Notch signaling pathway. Shuttles between the cytoplasm and the nucleus and mediates the nuclear export of RBPJ/RBPSUH, thereby preventing the interaction between RBPJ/RBPSUH and NICD product of Notch proteins (Notch intracellular domain), leading to down-regulate Notch-mediated transcription. May play a role in neurogenesis. In Ailuropoda melanoleuca (Giant panda), this protein is RBPJ-interacting and tubulin-associated protein 1 (RITA1).